The chain runs to 190 residues: Apolipoprotein M (190 aa).

An N-terminal signal peptide occupies residues 1 to 17; the sequence is MFHQVWAALLYLYGLLF. 3 disulfides stabilise this stretch: C23–C169, C95–C185, and C130–C159. Tetradecanoate is bound by residues E138 and R145.

This sequence belongs to the calycin superfamily. Lipocalin family. Highly divergent. In terms of assembly, interacts with LRP2; LRP2 mediates APOM renal uptake and subsequent lysosomal degradation. In terms of tissue distribution, expressed by the liver; secreted in plasma.

The protein localises to the secreted. Functionally, probably involved in lipid transport. Can bind sphingosine-1-phosphate, myristic acid, palmitic acid and stearic acid, retinol, all-trans-retinoic acid and 9-cis-retinoic acid. This is Apolipoprotein M (Apom) from Rattus norvegicus (Rat).